The chain runs to 369 residues: Gibberellin 3-beta-dioxygenase 2-3 (369 aa).

One can recognise a Fe2OG dioxygenase domain in the interval 205-306 (MTATMHLNWY…RISLGYFLGP (102 aa)). Fe cation-binding residues include His-229, Asp-231, and His-287. Arg-297 is a catalytic residue.

The protein belongs to the iron/ascorbate-dependent oxidoreductase family. GA3OX subfamily. L-ascorbate is required as a cofactor. The cofactor is Fe cation.

The enzyme catalyses gibberellin A20 + 2-oxoglutarate + O2 = gibberellin A1 + succinate + CO2. Functionally, converts the inactive gibberellin precursors GA9 and GA20 in the bioactives gibberellins GA4 and GA1. The polypeptide is Gibberellin 3-beta-dioxygenase 2-3 (GA3ox2-3) (Triticum aestivum (Wheat)).